Reading from the N-terminus, the 237-residue chain is Probable transcriptional regulatory protein EAT1b_0153 (237 aa).

This sequence belongs to the TACO1 family. YeeN subfamily.

It is found in the cytoplasm. This chain is Probable transcriptional regulatory protein EAT1b_0153, found in Exiguobacterium sp. (strain ATCC BAA-1283 / AT1b).